A 343-amino-acid chain; its full sequence is Glycerol-3-phosphate dehydrogenase [NAD(P)+] (343 aa).

The NADPH site is built by Ser-11, Trp-12, His-32, Arg-33, and Lys-106. Lys-106, Gly-136, and Ser-138 together coordinate sn-glycerol 3-phosphate. NADPH is bound at residue Ala-140. Lys-192, Asp-245, Ser-255, Arg-256, and Asn-257 together coordinate sn-glycerol 3-phosphate. The Proton acceptor role is filled by Lys-192. Arg-256 lines the NADPH pocket. Val-280 and Glu-282 together coordinate NADPH.

This sequence belongs to the NAD-dependent glycerol-3-phosphate dehydrogenase family.

It localises to the cytoplasm. It carries out the reaction sn-glycerol 3-phosphate + NAD(+) = dihydroxyacetone phosphate + NADH + H(+). The enzyme catalyses sn-glycerol 3-phosphate + NADP(+) = dihydroxyacetone phosphate + NADPH + H(+). The protein operates within membrane lipid metabolism; glycerophospholipid metabolism. Functionally, catalyzes the reduction of the glycolytic intermediate dihydroxyacetone phosphate (DHAP) to sn-glycerol 3-phosphate (G3P), the key precursor for phospholipid synthesis. The sequence is that of Glycerol-3-phosphate dehydrogenase [NAD(P)+] from Geobacillus thermodenitrificans (strain NG80-2).